We begin with the raw amino-acid sequence, 227 residues long: Ubiquitin-conjugating enzyme E2 6 (227 aa).

The Cytoplasmic segment spans residues 1–206; that stretch reads MASKGAYKRL…NSKQSWVKSR (206 aa). Positions 5–163 constitute a UBC core domain; that stretch reads GAYKRLMKEY…FPELIDKNRE (159 aa). Cysteine 87 functions as the Glycyl thioester intermediate in the catalytic mechanism. A helical membrane pass occupies residues 207–225; sequence WSIAVLVFFALALARFFGA.

The protein belongs to the ubiquitin-conjugating enzyme family.

It localises to the endoplasmic reticulum membrane. It carries out the reaction S-ubiquitinyl-[E1 ubiquitin-activating enzyme]-L-cysteine + [E2 ubiquitin-conjugating enzyme]-L-cysteine = [E1 ubiquitin-activating enzyme]-L-cysteine + S-ubiquitinyl-[E2 ubiquitin-conjugating enzyme]-L-cysteine.. Its pathway is protein modification; protein ubiquitination. Functionally, catalyzes the covalent attachment of ubiquitin to other proteins. Functions in degradation of misfolded or regulated proteins localized in the endoplasmic reticulum (ER) lumen or membrane via the ubiquitin-proteasome system. Cognate E2 conjugating enzyme for the doa10 ubiquitin ligase complex, which is part of the ERAD-C pathway responsible for the rapid degradation of membrane proteins with misfolded cytoplasmic domains. This chain is Ubiquitin-conjugating enzyme E2 6 (ubc6), found in Schizosaccharomyces pombe (strain 972 / ATCC 24843) (Fission yeast).